A 61-amino-acid polypeptide reads, in one-letter code: Small ribosomal subunit protein uS14B (61 aa).

4 residues coordinate Zn(2+): cysteine 24, cysteine 27, cysteine 40, and cysteine 43.

This sequence belongs to the universal ribosomal protein uS14 family. Zinc-binding uS14 subfamily. Part of the 30S ribosomal subunit. Contacts proteins S3 and S10. Requires Zn(2+) as cofactor.

Its function is as follows. Binds 16S rRNA, required for the assembly of 30S particles and may also be responsible for determining the conformation of the 16S rRNA at the A site. The protein is Small ribosomal subunit protein uS14B of Streptococcus agalactiae serotype Ia (strain ATCC 27591 / A909 / CDC SS700).